A 599-amino-acid polypeptide reads, in one-letter code: Elongation factor 4 (599 aa).

The tr-type G domain maps to 5–187; the sequence is STIRNFAIIA…AIVHRLPAPV (183 aa). Residues 17–22 and 134–137 contribute to the GTP site; these read DHGKST and NKAD.

It belongs to the TRAFAC class translation factor GTPase superfamily. Classic translation factor GTPase family. LepA subfamily.

The protein resides in the cell inner membrane. It catalyses the reaction GTP + H2O = GDP + phosphate + H(+). In terms of biological role, required for accurate and efficient protein synthesis under certain stress conditions. May act as a fidelity factor of the translation reaction, by catalyzing a one-codon backward translocation of tRNAs on improperly translocated ribosomes. Back-translocation proceeds from a post-translocation (POST) complex to a pre-translocation (PRE) complex, thus giving elongation factor G a second chance to translocate the tRNAs correctly. Binds to ribosomes in a GTP-dependent manner. This is Elongation factor 4 from Anaplasma marginale (strain Florida).